The chain runs to 272 residues: Phosphatidylglycerol--prolipoprotein diacylglyceryl transferase (272 aa).

4 consecutive transmembrane segments (helical) span residues 24-44 (WYAL…RHLV), 64-84 (LLVY…VVFY), 99-119 (LWQG…GVML), and 125-145 (GLPT…GLFL). R147 lines the a 1,2-diacyl-sn-glycero-3-phospho-(1'-sn-glycerol) pocket. 3 helical membrane-spanning segments follow: residues 185–205 (AAAE…LGAL), 209–229 (GLVT…CEFF), and 245–265 (MGML…AFAY).

The protein belongs to the Lgt family.

The protein resides in the cell inner membrane. It catalyses the reaction L-cysteinyl-[prolipoprotein] + a 1,2-diacyl-sn-glycero-3-phospho-(1'-sn-glycerol) = an S-1,2-diacyl-sn-glyceryl-L-cysteinyl-[prolipoprotein] + sn-glycerol 1-phosphate + H(+). Its pathway is protein modification; lipoprotein biosynthesis (diacylglyceryl transfer). Catalyzes the transfer of the diacylglyceryl group from phosphatidylglycerol to the sulfhydryl group of the N-terminal cysteine of a prolipoprotein, the first step in the formation of mature lipoproteins. This chain is Phosphatidylglycerol--prolipoprotein diacylglyceryl transferase, found in Methylocella silvestris (strain DSM 15510 / CIP 108128 / LMG 27833 / NCIMB 13906 / BL2).